The sequence spans 429 residues: UDP-N-acetylglucosamine 1-carboxyvinyltransferase (429 aa).

22 to 23 (KN) contributes to the phosphoenolpyruvate binding site. Position 102 (Arg-102) interacts with UDP-N-acetyl-alpha-D-glucosamine. Catalysis depends on Cys-126, which acts as the Proton donor. Cys-126 carries the 2-(S-cysteinyl)pyruvic acid O-phosphothioketal modification. Residues 131 to 135 (RPVDL), Asp-316, and Ile-338 contribute to the UDP-N-acetyl-alpha-D-glucosamine site.

Belongs to the EPSP synthase family. MurA subfamily.

It localises to the cytoplasm. It carries out the reaction phosphoenolpyruvate + UDP-N-acetyl-alpha-D-glucosamine = UDP-N-acetyl-3-O-(1-carboxyvinyl)-alpha-D-glucosamine + phosphate. It functions in the pathway cell wall biogenesis; peptidoglycan biosynthesis. In terms of biological role, cell wall formation. Adds enolpyruvyl to UDP-N-acetylglucosamine. The polypeptide is UDP-N-acetylglucosamine 1-carboxyvinyltransferase (Rhodopseudomonas palustris (strain BisA53)).